Reading from the N-terminus, the 396-residue chain is Beta-1,3-N-acetylglucosaminyltransferase radical fringe (396 aa).

The Cytoplasmic portion of the chain corresponds to 1–6 (MNFSCL). The chain crosses the membrane as a helical; Signal-anchor for type II membrane protein span at residues 7 to 27 (GLSKICFLVSVIFCTFLLLFI). The Lumenal portion of the chain corresponds to 28–396 (PKTKTPWRPR…THWCPPRKTR (369 aa)). N-linked (GlcNAc...) asparagine glycans are attached at residues N49 and N120. Residue R145 participates in substrate binding. N184 carries an N-linked (GlcNAc...) asparagine glycan. 2 disulfide bridges follow: C185/C196 and C214/C277. D218 is a binding site for substrate. D219 provides a ligand contact to Mn(2+). The active site involves D307. H331 provides a ligand contact to Mn(2+). C381 and C390 are oxidised to a cystine.

The protein belongs to the glycosyltransferase 31 family. Mn(2+) serves as cofactor. In terms of tissue distribution, detected in the mesanchymal region of the developing limb. Expressed in mesoderm but not in ectoderm with no evident boundary of expression.

The protein localises to the golgi apparatus membrane. The catalysed reaction is 3-O-(alpha-L-fucosyl)-L-threonyl-[EGF-like domain protein] + UDP-N-acetyl-alpha-D-glucosamine = 3-O-(N-acetyl-beta-D-glucosaminyl-(1-&gt;3)-alpha-L-fucosyl)-L-threonyl-[EGF-like domain protein] + UDP + H(+). The enzyme catalyses 3-O-(alpha-L-fucosyl)-L-seryl-[EGF-like domain protein] + UDP-N-acetyl-alpha-D-glucosamine = 3-O-(N-acetyl-beta-D-glucosaminyl-(1-&gt;3)-alpha-L-fucosyl)-L-seryl-[EGF-like domain protein] + UDP + H(+). In terms of biological role, glycosyltransferase that initiates the elongation of O-linked fucose residues attached to EGF-like repeats in the extracellular domain of Notch molecules. Involved in forelimb development and in adult forelimb regeneration. The polypeptide is Beta-1,3-N-acetylglucosaminyltransferase radical fringe (RFNG) (Notophthalmus viridescens (Eastern newt)).